Reading from the N-terminus, the 3189-residue chain is Beauvericin nonribosomal cyclodepsipeptide synthetase (3189 aa).

Residues 73–466 are condensation 1; that stretch reads HAMYEISQHV…EQLQSAADDA (394 aa). The interval 202–223 is disordered; it reads DSLPLTPDSSGGSDSDSPSTLK. Residues 208 to 220 are compositionally biased toward low complexity; sequence PDSSGGSDSDSPS. The adenylation 1 stretch occupies residues 507–901; the sequence is AESPSDPAVL…GRIDSQVKIR (395 aa). The Carrier 1 domain maps to 1036-1112; that stretch reads TLETGPEARL…RLQAVMSGDS (77 aa). Residue serine 1073 is modified to O-(pantetheine 4'-phosphoryl)serine. Residues 1136 to 1569 are condensation 2; sequence SYSQGRLWFL…KSLISVLPLT (434 aa). An adenylation 2 region spans residues 1599-2004; sequence FRSQVATCPD…GRMDFQFKIR (406 aa). The interval 2072-2211 is S-adenosyl-L-methionine-dependent N-methyltransferase; that stretch reads MYNGIDAISP…FPTVEYLTRV (140 aa). Carrier domains are found at residues 2557-2631 and 2654-2728; these read CPIS…REGL and APRN…ELGQ. An O-(pantetheine 4'-phosphoryl)serine mark is found at serine 2591 and serine 2688. Positions 2773–3181 are condensation 3; the sequence is QDVYPATHMQ…AYLMEEVCRL (409 aa).

The protein belongs to the NRP synthetase family.

It carries out the reaction 3 (R)-2-hydroxy-3-methylbutanoate + 3 L-phenylalanine + 3 S-adenosyl-L-methionine + 6 ATP = beauvericin + 6 AMP + 3 S-adenosyl-L-homocysteine + 6 diphosphate + 6 H(+). Functionally, beauvericin nonribosomal cyclodepsipeptide synthetase; part of the gene cluster that mediates the biosynthesis of beauvericin (BEA), a non-ribosomal cyclic hexadepsipeptide that shows antibiotic, antifungal, insecticidal, and cancer cell antiproliferative and antihaptotactic activity. Ketoisovalerate reductase BEA2 catalyzes the NADPH-specific reduction of ketoisovaleric acid to hydroxyisovalerate, a precursor for beauvericin biosynthesis. The nonribosomal cyclodepsipeptide synthetase BEA1 then catalyzes the formation of beauvericin via condensation and cyclization of 3 dipeptidol monomers, each composed of one unit of hydroxyisovalerate and one unit of N-methyl-phenylalanine. This is Beauvericin nonribosomal cyclodepsipeptide synthetase (Beas) from Beauveria bassiana (White muscardine disease fungus).